Reading from the N-terminus, the 276-residue chain is Pantothenate synthetase (276 aa).

ATP is bound at residue 27-34; it reads MGALHRGH. Catalysis depends on histidine 34, which acts as the Proton donor. Glutamine 58 serves as a coordination point for (R)-pantoate. Glutamine 58 is a binding site for beta-alanine. Residue 147–150 coordinates ATP; sequence GKKD. Glutamine 153 provides a ligand contact to (R)-pantoate. Residues valine 176 and 184 to 187 each bind ATP; that span reads LSSR.

It belongs to the pantothenate synthetase family. As to quaternary structure, homodimer.

Its subcellular location is the cytoplasm. It catalyses the reaction (R)-pantoate + beta-alanine + ATP = (R)-pantothenate + AMP + diphosphate + H(+). It functions in the pathway cofactor biosynthesis; (R)-pantothenate biosynthesis; (R)-pantothenate from (R)-pantoate and beta-alanine: step 1/1. Its function is as follows. Catalyzes the condensation of pantoate with beta-alanine in an ATP-dependent reaction via a pantoyl-adenylate intermediate. The protein is Pantothenate synthetase of Helicobacter pylori (strain J99 / ATCC 700824) (Campylobacter pylori J99).